The chain runs to 110 residues: MIIMMYACLSLVFFLSVSFFPHKLCTVRVRTPYTVSVNDGPLLFPHRKKKNKAQYTCGFLVRIELGVYFFSSPTSSPSHSFYIYTCPRLGGNVCRFQVVVTMMMWFLSGW.

This is an uncharacterized protein from Human cytomegalovirus (strain AD169) (HHV-5).